A 375-amino-acid polypeptide reads, in one-letter code: 4-hydroxy-3-methylbut-2-en-1-yl diphosphate synthase (flavodoxin) (375 aa).

Residues cysteine 270, cysteine 273, cysteine 305, and glutamate 312 each coordinate [4Fe-4S] cluster.

This sequence belongs to the IspG family. Requires [4Fe-4S] cluster as cofactor.

It catalyses the reaction (2E)-4-hydroxy-3-methylbut-2-enyl diphosphate + oxidized [flavodoxin] + H2O + 2 H(+) = 2-C-methyl-D-erythritol 2,4-cyclic diphosphate + reduced [flavodoxin]. The protein operates within isoprenoid biosynthesis; isopentenyl diphosphate biosynthesis via DXP pathway; isopentenyl diphosphate from 1-deoxy-D-xylulose 5-phosphate: step 5/6. Functionally, converts 2C-methyl-D-erythritol 2,4-cyclodiphosphate (ME-2,4cPP) into 1-hydroxy-2-methyl-2-(E)-butenyl 4-diphosphate. The chain is 4-hydroxy-3-methylbut-2-en-1-yl diphosphate synthase (flavodoxin) from Yersinia pestis (strain Pestoides F).